A 180-amino-acid chain; its full sequence is MASTSSLLNFLSPLFPSNTSLPPSSNPKFPNPNSLSSQQNSISISSKKHENAAIAKKEEYPGDLMAVVCPSLAFSNTLYFRSAYNVQVLVDDNENEERLLNRFRREVMRAGVIQECKRRRYFENKQEEKKRKHREAAKRNSRRRRGPFRGPFPGKEEATKVDKKEDDGDNWDMPEGGAPF.

The transit peptide at 1 to 79 directs the protein to the chloroplast; the sequence is MASTSSLLNF…PSLAFSNTLY (79 aa). Residues 14–45 show a composition bias toward low complexity; it reads LFPSNTSLPPSSNPKFPNPNSLSSQQNSISIS. Disordered stretches follow at residues 14 to 49 and 124 to 180; these read LFPS…SKKH and NKQE…GAPF. Over residues 130-147 the composition is skewed to basic residues; it reads KRKHREAAKRNSRRRRGP. Over residues 154–166 the composition is skewed to basic and acidic residues; that stretch reads GKEEATKVDKKED.

In terms of assembly, component of the chloroplast small ribosomal subunit (SSU). Mature 70S chloroplast ribosomes of higher plants consist of a small (30S) and a large (50S) subunit. The 30S small subunit contains 1 molecule of ribosomal RNA (16S rRNA) and 24 different proteins. The 50S large subunit contains 3 rRNA molecules (23S, 5S and 4.5S rRNA) and 33 different proteins. bS21c binds directly to 16S ribosomal RNA.

It is found in the plastid. The protein localises to the chloroplast. Component of the chloroplast ribosome (chloro-ribosome), a dedicated translation machinery responsible for the synthesis of chloroplast genome-encoded proteins, including proteins of the transcription and translation machinery and components of the photosynthetic apparatus. The chain is Small ribosomal subunit protein bS21c (rps21) from Spinacia oleracea (Spinach).